We begin with the raw amino-acid sequence, 319 residues long: N-acetylneuraminate lyase (319 aa).

Positions 51 and 52 each coordinate aceneuramate. Y143 serves as the catalytic Proton donor. K173 acts as the Schiff-base intermediate with substrate in catalysis. Aceneuramate-binding residues include S175, G199, D201, E202, and S218.

This sequence belongs to the DapA family. NanA subfamily. In terms of assembly, homotetramer.

The protein resides in the cytoplasm. The enzyme catalyses aceneuramate = aldehydo-N-acetyl-D-mannosamine + pyruvate. It participates in amino-sugar metabolism; N-acetylneuraminate degradation. Its function is as follows. Catalyzes the cleavage of N-acetylneuraminic acid (sialic acid) to form pyruvate and N-acetylmannosamine via a Schiff base intermediate. It prevents sialic acids from being recycled and returning to the cell surface. Involved in the N-glycolylneuraminic acid (Neu5Gc) degradation pathway. The sequence is that of N-acetylneuraminate lyase from Sus scrofa (Pig).